Consider the following 267-residue polypeptide: Urease accessory protein UreD (267 aa).

This sequence belongs to the UreD family. In terms of assembly, ureD, UreF and UreG form a complex that acts as a GTP-hydrolysis-dependent molecular chaperone, activating the urease apoprotein by helping to assemble the nickel containing metallocenter of UreC. The UreE protein probably delivers the nickel.

Its subcellular location is the cytoplasm. Required for maturation of urease via the functional incorporation of the urease nickel metallocenter. The chain is Urease accessory protein UreD from Synechococcus sp. (strain JA-2-3B'a(2-13)) (Cyanobacteria bacterium Yellowstone B-Prime).